The sequence spans 484 residues: Hexokinase-2 (484 aa).

Residues 21-467 form the Hexokinase domain; sequence PQLLEALKPI…SGVGAAVIAA (447 aa). The segment at 75–208 is hexokinase small subdomain; it reads TGKETGSYLA…GVPIDVVALI (134 aa). The segment at 209 to 456 is hexokinase large subdomain; it reads NDTTGTLVAS…DPIIIVPAED (248 aa).

It belongs to the hexokinase family. As to quaternary structure, monomer.

It is found in the cytoplasm. It catalyses the reaction a D-hexose + ATP = a D-hexose 6-phosphate + ADP + H(+). The enzyme catalyses D-fructose + ATP = D-fructose 6-phosphate + ADP + H(+). It carries out the reaction D-glucose + ATP = D-glucose 6-phosphate + ADP + H(+). It participates in carbohydrate metabolism; hexose metabolism. Its pathway is carbohydrate degradation; glycolysis; D-glyceraldehyde 3-phosphate and glycerone phosphate from D-glucose: step 1/4. Catalyzes the phosphorylation of hexose, such as D-glucose and D-fructose, to hexose 6-phosphate (D-glucose 6-phosphate and D-fructose 6-phosphate, respectively). Mediates the initial step of glycolysis by catalyzing phosphorylation of D-glucose to D-glucose 6-phosphate. This Candida albicans (strain SC5314 / ATCC MYA-2876) (Yeast) protein is Hexokinase-2 (HXK2).